The sequence spans 558 residues: Nuclear speckle splicing regulatory protein 1 (558 aa).

The tract at residues 21-54 (PVLQKPSVFGNDSDDDDETSVSESLQREAAKKQA) is disordered. Phosphoserine is present on residues Ser-27 and Ser-33. Positions 104–170 (IHNLLKAVEI…REKRAAALEA (67 aa)) form a coiled coil. Residues 106 to 170 (NLLKAVEIRK…REKRAAALEA (65 aa)) form a necessary for alternative splicing activity region. Glycyl lysine isopeptide (Lys-Gly) (interchain with G-Cter in SUMO2) cross-links involve residues Lys-199 and Lys-210. Over residues 204–215 (EARSGIKEEKSR) the composition is skewed to basic and acidic residues. The disordered stretch occupies residues 204 to 534 (EARSGIKEEK…KRNNEETVMS (331 aa)). A compositionally biased stretch (polar residues) spans 216-226 (GFSNEVSSKNR). 3 positions are modified to phosphoserine: Ser-248, Ser-254, and Ser-255. Basic and acidic residues predominate over residues 250–280 (FDAKSSADDEIEETRVNCRREKVIETPENDF). Thr-275 is modified (phosphothreonine). Lys-281 participates in a covalent cross-link: Glycyl lysine isopeptide (Lys-Gly) (interchain with G-Cter in SUMO2). A compositionally biased stretch (basic residues) spans 299-310 (STRHHTKGSRTS). 3 stretches are compositionally biased toward basic and acidic residues: residues 311–442 (RGHE…KREV), 449–487 (RNQDRKESSPNSRAKDKFLDQERSNKMRNMAKDKERNQE), and 501–517 (RLTEEGQEKGKEQERPP). Residues 379-427 (KREKDREKYSQREQERDRQQNDQNRPSEKGEKEEKSKAKEEHMKVRKER) are a coiled coil. Position 457 is a phosphoserine (Ser-457).

It belongs to the NSRP1 family. Interacts (via C-terminus) with SRSF1. Interacts (via C-terminus) with SRSF2. Expressed in dendritic cells, T-cells, B-cells and natural killer cells. Expressed in secondary lymphoid organs such as spleen and mesenteric, axillary and brachial lymph nodes.

It is found in the nucleus. The protein resides in the nucleus speckle. Its function is as follows. RNA-binding protein that mediates pre-mRNA alternative splicing regulation. In Homo sapiens (Human), this protein is Nuclear speckle splicing regulatory protein 1 (NSRP1).